We begin with the raw amino-acid sequence, 122 residues long: NLWQFGKLIMKIAGESGVFKYLSYGCYCGLGGQGQPTDATDRCCFVHDCCYGKVTGCDPKIDSYTYSKENGDVVCGGDDPCKKQICECDRVAATCFRDNKDTYDIKYWFYGAKNCQEESEPC.

7 disulfide bridges follow: cysteine 26–cysteine 115, cysteine 28–cysteine 44, cysteine 43–cysteine 95, cysteine 49–cysteine 122, cysteine 50–cysteine 88, cysteine 57–cysteine 81, and cysteine 75–cysteine 86. Ca(2+)-binding residues include tyrosine 27, glycine 29, and glycine 31. Histidine 47 is an active-site residue. A Ca(2+)-binding site is contributed by aspartate 48. The active site involves aspartate 89. The Antiplatelet activity motif lies at 105–117 (IKYWFYGAKNCQE).

Belongs to the phospholipase A2 family. Group II subfamily. D49 sub-subfamily. Ca(2+) is required as a cofactor. In terms of tissue distribution, expressed by the venom gland.

It localises to the secreted. The catalysed reaction is a 1,2-diacyl-sn-glycero-3-phosphocholine + H2O = a 1-acyl-sn-glycero-3-phosphocholine + a fatty acid + H(+). Inhibited by EDTA and p-bromophenacyl bromide (BPB). Its function is as follows. Snake venom phospholipase A2 (PLA2) that inhibits collagen/ADP-induced platelet aggregation, and induces hypotension in rats (activity abolished in the presence of p-bromophenacyl bromide). PLA2 catalyzes the calcium-dependent hydrolysis of the 2-acyl groups in 3-sn-phosphoglycerides. The protein is Acidic phospholipase A2 BpirPLA2-I of Bothrops pirajai (Piraja's lancehead).